The primary structure comprises 324 residues: Phospho-N-acetylmuramoyl-pentapeptide-transferase (324 aa).

A run of 10 helical transmembrane segments spans residues 5 to 25 (GLLV…PLFI), 52 to 72 (PTMG…IMAI), 77 to 97 (LGAE…IGFL), 122 to 142 (VIAI…YIMI), 149 to 169 (FELG…GSNA), 176 to 196 (LDGL…IIAV), 201 to 221 (FGVA…LVFN), 227 to 247 (VFMG…VAIL), 253 to 273 (LLVI…IQVI), and 302 to 322 (VVVT…YIGV).

This sequence belongs to the glycosyltransferase 4 family. MraY subfamily. Mg(2+) serves as cofactor.

Its subcellular location is the cell membrane. The enzyme catalyses UDP-N-acetyl-alpha-D-muramoyl-L-alanyl-gamma-D-glutamyl-meso-2,6-diaminopimeloyl-D-alanyl-D-alanine + di-trans,octa-cis-undecaprenyl phosphate = di-trans,octa-cis-undecaprenyl diphospho-N-acetyl-alpha-D-muramoyl-L-alanyl-D-glutamyl-meso-2,6-diaminopimeloyl-D-alanyl-D-alanine + UMP. It participates in cell wall biogenesis; peptidoglycan biosynthesis. Catalyzes the initial step of the lipid cycle reactions in the biosynthesis of the cell wall peptidoglycan: transfers peptidoglycan precursor phospho-MurNAc-pentapeptide from UDP-MurNAc-pentapeptide onto the lipid carrier undecaprenyl phosphate, yielding undecaprenyl-pyrophosphoryl-MurNAc-pentapeptide, known as lipid I. The sequence is that of Phospho-N-acetylmuramoyl-pentapeptide-transferase from Bacillus anthracis.